The primary structure comprises 130 residues: Large ribosomal subunit protein bL12 (130 aa).

It belongs to the bacterial ribosomal protein bL12 family. In terms of assembly, homodimer. Part of the ribosomal stalk of the 50S ribosomal subunit. Forms a multimeric L10(L12)X complex, where L10 forms an elongated spine to which 2 to 4 L12 dimers bind in a sequential fashion. Binds GTP-bound translation factors.

In terms of biological role, forms part of the ribosomal stalk which helps the ribosome interact with GTP-bound translation factors. Is thus essential for accurate translation. This Chlamydia trachomatis serovar L2 (strain ATCC VR-902B / DSM 19102 / 434/Bu) protein is Large ribosomal subunit protein bL12.